Reading from the N-terminus, the 520-residue chain is Cytochrome P450 6d3 (520 aa).

Residue C461 participates in heme binding.

The protein belongs to the cytochrome P450 family. It depends on heme as a cofactor.

The protein resides in the endoplasmic reticulum membrane. It is found in the microsome membrane. In terms of biological role, metabolizes pyrethroid insecticides and other xenobiotics. The protein is Cytochrome P450 6d3 (CYP6D3) of Musca domestica (House fly).